A 167-amino-acid polypeptide reads, in one-letter code: NAD(P)H-quinone oxidoreductase subunit I, chloroplastic (167 aa).

2 consecutive 4Fe-4S ferredoxin-type domains span residues 55 to 84 (GRIH…VDWK) and 95 to 124 (LNYS…MTEE). C64, C67, C70, C74, C104, C107, C110, and C114 together coordinate [4Fe-4S] cluster.

It belongs to the complex I 23 kDa subunit family. NDH is composed of at least 16 different subunits, 5 of which are encoded in the nucleus. Requires [4Fe-4S] cluster as cofactor.

It localises to the plastid. The protein resides in the chloroplast thylakoid membrane. The catalysed reaction is a plastoquinone + NADH + (n+1) H(+)(in) = a plastoquinol + NAD(+) + n H(+)(out). The enzyme catalyses a plastoquinone + NADPH + (n+1) H(+)(in) = a plastoquinol + NADP(+) + n H(+)(out). Functionally, NDH shuttles electrons from NAD(P)H:plastoquinone, via FMN and iron-sulfur (Fe-S) centers, to quinones in the photosynthetic chain and possibly in a chloroplast respiratory chain. The immediate electron acceptor for the enzyme in this species is believed to be plastoquinone. Couples the redox reaction to proton translocation, and thus conserves the redox energy in a proton gradient. In Atropa belladonna (Belladonna), this protein is NAD(P)H-quinone oxidoreductase subunit I, chloroplastic.